Reading from the N-terminus, the 405-residue chain is Probable tRNA sulfurtransferase (405 aa).

A THUMP domain is found at 60–165 (AEVDKRLKKV…QDAVYISNQL (106 aa)). Residues 183 to 184 (ML), 208 to 209 (HF), Arg265, Gly287, and Gln296 contribute to the ATP site.

Belongs to the ThiI family.

Its subcellular location is the cytoplasm. It catalyses the reaction [ThiI sulfur-carrier protein]-S-sulfanyl-L-cysteine + a uridine in tRNA + 2 reduced [2Fe-2S]-[ferredoxin] + ATP + H(+) = [ThiI sulfur-carrier protein]-L-cysteine + a 4-thiouridine in tRNA + 2 oxidized [2Fe-2S]-[ferredoxin] + AMP + diphosphate. The enzyme catalyses [ThiS sulfur-carrier protein]-C-terminal Gly-Gly-AMP + S-sulfanyl-L-cysteinyl-[cysteine desulfurase] + AH2 = [ThiS sulfur-carrier protein]-C-terminal-Gly-aminoethanethioate + L-cysteinyl-[cysteine desulfurase] + A + AMP + 2 H(+). It participates in cofactor biosynthesis; thiamine diphosphate biosynthesis. Catalyzes the ATP-dependent transfer of a sulfur to tRNA to produce 4-thiouridine in position 8 of tRNAs, which functions as a near-UV photosensor. Also catalyzes the transfer of sulfur to the sulfur carrier protein ThiS, forming ThiS-thiocarboxylate. This is a step in the synthesis of thiazole, in the thiamine biosynthesis pathway. The sulfur is donated as persulfide by IscS. The polypeptide is Probable tRNA sulfurtransferase (Lactobacillus helveticus (strain DPC 4571)).